A 498-amino-acid polypeptide reads, in one-letter code: Probable malate:quinone oxidoreductase 2 (498 aa).

This sequence belongs to the MQO family. The cofactor is FAD.

The catalysed reaction is (S)-malate + a quinone = a quinol + oxaloacetate. The protein operates within carbohydrate metabolism; tricarboxylic acid cycle; oxaloacetate from (S)-malate (quinone route): step 1/1. The sequence is that of Probable malate:quinone oxidoreductase 2 from Staphylococcus epidermidis (strain ATCC 12228 / FDA PCI 1200).